Consider the following 364-residue polypeptide: Alanine racemase (364 aa).

K34 functions as the Proton acceptor; specific for D-alanine in the catalytic mechanism. Residue K34 is modified to N6-(pyridoxal phosphate)lysine. R129 serves as a coordination point for substrate. Y259 serves as the catalytic Proton acceptor; specific for L-alanine. M307 is a binding site for substrate.

The protein belongs to the alanine racemase family. Pyridoxal 5'-phosphate is required as a cofactor.

It catalyses the reaction L-alanine = D-alanine. The protein operates within amino-acid biosynthesis; D-alanine biosynthesis; D-alanine from L-alanine: step 1/1. In terms of biological role, catalyzes the interconversion of L-alanine and D-alanine. May also act on other amino acids. The protein is Alanine racemase (alr) of Coxiella burnetii (strain Dugway 5J108-111).